A 306-amino-acid chain; its full sequence is MLKFILRRCLEAIPTLFILITISFFMMRLAPGSPFTGERTLPPEVMANIEAKYHLNDPIMTQYFSYLKQLAHGDFGPSFKYKDYSVNDLVASSFPVSAKLGAAAFFLAVILGVSAGVIAALKQNTKWDYTVMGLAMTGVVIPSFVVAPLLVMIFAIILHWLPGGGWNGGALKFMILPMVALSLAYIASIARITRGSMIEVLHSNFIRTARAKGLPMRRIILRHALKPALLPVLSYMGPAFVGIITGSMVIETIYGLPGIGQLFVNGALNRDYSLVLSLTILVGALTILFNAIVDVLYAVIDPKIRY.

The Cytoplasmic portion of the chain corresponds to 1–11; sequence MLKFILRRCLE. Residues 12 to 32 traverse the membrane as a helical segment; it reads AIPTLFILITISFFMMRLAPG. Topologically, residues 33-99 are periplasmic; it reads SPFTGERTLP…VASSFPVSAK (67 aa). Positions 94-293 constitute an ABC transmembrane type-1 domain; it reads FPVSAKLGAA…ALTILFNAIV (200 aa). A helical membrane pass occupies residues 100–120; that stretch reads LGAAAFFLAVILGVSAGVIAA. Over 121–137 the chain is Cytoplasmic; it reads LKQNTKWDYTVMGLAMT. Residues 138 to 158 traverse the membrane as a helical segment; that stretch reads GVVIPSFVVAPLLVMIFAIIL. The Periplasmic segment spans residues 159 to 169; the sequence is HWLPGGGWNGG. Residues 170 to 190 form a helical membrane-spanning segment; it reads ALKFMILPMVALSLAYIASIA. The Cytoplasmic portion of the chain corresponds to 191–229; sequence RITRGSMIEVLHSNFIRTARAKGLPMRRIILRHALKPAL. The chain crosses the membrane as a helical span at residues 230 to 250; it reads LPVLSYMGPAFVGIITGSMVI. The Periplasmic segment spans residues 251 to 279; it reads ETIYGLPGIGQLFVNGALNRDYSLVLSLT. A helical membrane pass occupies residues 280-300; sequence ILVGALTILFNAIVDVLYAVI. At 301–306 the chain is on the cytoplasmic side; the sequence is DPKIRY.

This sequence belongs to the binding-protein-dependent transport system permease family. OppBC subfamily. In terms of assembly, the complex is composed of two ATP-binding proteins (OppD and OppF), two transmembrane proteins (OppB and OppC) and a solute-binding protein (OppA).

It is found in the cell inner membrane. Part of the ABC transporter complex OppABCDF involved in the uptake of oligopeptides. Probably responsible for the translocation of the substrate across the membrane. The sequence is that of Oligopeptide transport system permease protein OppB (oppB) from Shigella flexneri.